A 453-amino-acid polypeptide reads, in one-letter code: DNA repair protein RadA (453 aa).

The C4-type zinc-finger motif lies at 10–27 (CQECGYQSPKYLGRCPNC). ATP is bound at residue 95–102 (GDPGIGKS). A RadA KNRFG motif motif is present at residues 251–255 (KNRFG). The interval 350–453 (DAYLKSAGGV…VGQVLKAVFS (104 aa)) is lon-protease-like.

This sequence belongs to the RecA family. RadA subfamily.

In terms of biological role, DNA-dependent ATPase involved in processing of recombination intermediates, plays a role in repairing DNA breaks. Stimulates the branch migration of RecA-mediated strand transfer reactions, allowing the 3' invading strand to extend heteroduplex DNA faster. Binds ssDNA in the presence of ADP but not other nucleotides, has ATPase activity that is stimulated by ssDNA and various branched DNA structures, but inhibited by SSB. Does not have RecA's homology-searching function. The sequence is that of DNA repair protein RadA from Streptococcus pyogenes serotype M6 (strain ATCC BAA-946 / MGAS10394).